We begin with the raw amino-acid sequence, 274 residues long: Rhamnulose-1-phosphate aldolase (274 aa).

Residue Glu-117 is part of the active site. Zn(2+)-binding residues include His-141, His-143, and His-212.

The protein belongs to the aldolase class II family. RhaD subfamily. As to quaternary structure, homotetramer. Zn(2+) serves as cofactor.

It is found in the cytoplasm. It catalyses the reaction L-rhamnulose 1-phosphate = (S)-lactaldehyde + dihydroxyacetone phosphate. Its pathway is carbohydrate degradation; L-rhamnose degradation; glycerone phosphate from L-rhamnose: step 3/3. Catalyzes the reversible cleavage of L-rhamnulose-1-phosphate to dihydroxyacetone phosphate (DHAP) and L-lactaldehyde. The chain is Rhamnulose-1-phosphate aldolase from Escherichia coli (strain SE11).